The chain runs to 422 residues: Glutamate 2,3-aminomutase (422 aa).

Positions 150–371 constitute a Radical SAM core domain; sequence RRYPDRLIIN…AIPTYIVNAP (222 aa). [4Fe-4S] cluster contacts are provided by Cys164, Cys168, and Cys171. Position 376 is an N6-(pyridoxal phosphate)lysine (Lys376).

The protein belongs to the radical SAM superfamily. Pyridoxal 5'-phosphate serves as cofactor. It depends on [4Fe-4S] cluster as a cofactor.

The enzyme catalyses L-glutamate = 3-aminopentanedioate. Catalyzes the interconversion of L-glutamate and L-beta-glutamate. Does not have L-lysine 2,3-aminomutase activity. The polypeptide is Glutamate 2,3-aminomutase (eam) (Clostridioides difficile (strain 630) (Peptoclostridium difficile)).